The primary structure comprises 67 residues: 2S seed storage albumin protein (67 aa).

It belongs to the 2S seed storage albumins family. As to quaternary structure, heterodimer of a small and a large chain linked by disulfide bonds.

The protein resides in the vacuole. It is found in the aleurone grain. In terms of biological role, this is a 2S seed storage protein. The sequence is that of 2S seed storage albumin protein from Matteuccia struthiopteris (European ostrich fern).